The following is a 284-amino-acid chain: Tropomyosin (284 aa).

A coiled-coil region spans residues 1–280 (MDAIKKKMQA…SDELDQTFAE (280 aa)).

Belongs to the tropomyosin family. Homodimer.

Functionally, tropomyosin, in association with the troponin complex, plays a central role in the calcium dependent regulation of muscle contraction. This is Tropomyosin from Sinonovacula constricta (Razor clam).